Here is a 272-residue protein sequence, read N- to C-terminus: 2-dehydro-3-deoxyphosphooctonate aldolase (272 aa).

It belongs to the KdsA family.

Its subcellular location is the cytoplasm. The enzyme catalyses D-arabinose 5-phosphate + phosphoenolpyruvate + H2O = 3-deoxy-alpha-D-manno-2-octulosonate-8-phosphate + phosphate. It functions in the pathway carbohydrate biosynthesis; 3-deoxy-D-manno-octulosonate biosynthesis; 3-deoxy-D-manno-octulosonate from D-ribulose 5-phosphate: step 2/3. Its pathway is bacterial outer membrane biogenesis; lipopolysaccharide biosynthesis. This Pelobacter propionicus (strain DSM 2379 / NBRC 103807 / OttBd1) protein is 2-dehydro-3-deoxyphosphooctonate aldolase.